The sequence spans 486 residues: Inosine-5'-monophosphate dehydrogenase (486 aa).

2 CBS domains span residues Ile-99–Glu-154 and Met-156–Glu-215. NAD(+)-binding positions include Asp-247 and Gly-294–Gly-296. Gly-296 and Gly-298 together coordinate K(+). Residue Ser-299 coordinates IMP. Cys-301 contributes to the K(+) binding site. Cys-301 acts as the Thioimidate intermediate in catalysis. IMP is bound by residues Asp-334–Gly-336, Gly-357–Asn-358, and Tyr-381–Gly-385. The Proton acceptor role is filled by Arg-397. Glu-412 contributes to the IMP binding site. Glu-466, Ser-467, and His-468 together coordinate K(+).

This sequence belongs to the IMPDH/GMPR family. In terms of assembly, homotetramer. It depends on K(+) as a cofactor.

It catalyses the reaction IMP + NAD(+) + H2O = XMP + NADH + H(+). The protein operates within purine metabolism; XMP biosynthesis via de novo pathway; XMP from IMP: step 1/1. Its activity is regulated as follows. Mycophenolic acid (MPA) is a non-competitive inhibitor that prevents formation of the closed enzyme conformation by binding to the same site as the amobile flap. In contrast, mizoribine monophosphate (MZP) is a competitive inhibitor that induces the closed conformation. MPA is a potent inhibitor of mammalian IMPDHs but a poor inhibitor of the bacterial enzymes. MZP is a more potent inhibitor of bacterial IMPDH. Functionally, catalyzes the conversion of inosine 5'-phosphate (IMP) to xanthosine 5'-phosphate (XMP), the first committed and rate-limiting step in the de novo synthesis of guanine nucleotides, and therefore plays an important role in the regulation of cell growth. This chain is Inosine-5'-monophosphate dehydrogenase, found in Pyrococcus horikoshii (strain ATCC 700860 / DSM 12428 / JCM 9974 / NBRC 100139 / OT-3).